The sequence spans 433 residues: MVNVVLGSQWGDEGKGKLVDLLVGKYDIVARCAGGNNAGHTIVVDGVKYDFHMLPSGLVNPNCQNLLGNGVVIHVPSFFKELETLEAKGLKNARSRLFVSSRAHLVFDFHQVTDKLRELELSGRSKDGKNIGTTGKGIGPTYSTKASRSGLRVHHLVNDQPGAWEEFVARYKRLLETRRQRYGDFEYDFEAKLAEYKKLREQLKPFVVDSVVFMHNAIEAKKKILVEGANALMLDIDFGTYPYVTSSNTGIGGVLTGLGIPPRTIDEIYGVVKAYTTRVGEGPFPTEQLNENGEKLQTIGAEFGVTTGRKRRCGWLDLVVLKYSTLINGYTSLNITKLDVLDTFKEIPVGISYSIQGKKLDLFPEDLNILGKVEVEYKVLPGWDQDITKITKYEDLPENAKKYLKYIEDFVGVPVEWVGTGPARESMLHKEIK.

GTP-binding positions include 11–17 (GDEGKGK) and 39–41 (GHT). Residue Asp-12 is the Proton acceptor of the active site. The Mg(2+) site is built by Asp-12 and Gly-39. Residues 12-15 (DEGK), 37-40 (NAGH), Thr-134, Arg-148, Asn-230, Thr-245, and Arg-309 each bind IMP. The active-site Proton donor is His-40. 305–311 (VTTGRKR) contributes to the substrate binding site. GTP-binding positions include Arg-311, 337–339 (KLD), and 419–421 (GTG).

The protein belongs to the adenylosuccinate synthetase family. In terms of assembly, homodimer. Mg(2+) serves as cofactor.

The protein localises to the cytoplasm. It catalyses the reaction IMP + L-aspartate + GTP = N(6)-(1,2-dicarboxyethyl)-AMP + GDP + phosphate + 2 H(+). It functions in the pathway purine metabolism; AMP biosynthesis via de novo pathway; AMP from IMP: step 1/2. Plays an important role in the de novo pathway and in the salvage pathway of purine nucleotide biosynthesis. Catalyzes the first committed step in the biosynthesis of AMP from IMP. The protein is Adenylosuccinate synthetase of Saccharomyces cerevisiae (strain JAY291) (Baker's yeast).